The primary structure comprises 495 residues: MQVIETLAEGLKREIKVVIPAKDMEDKMNERLADVKDKIRINGFRPGKVPAAHLKKVYGKSIMAELVNEIVREQPTAILSSRGEKSATQPEIAMTEDKDEADKILSAQQDFEFTLSYEVLPPIELKSVKGIKVTREVIDISDDEVTEQVLKVAESARSYESKTGKAANGDRVAMDYVGKVDGEAFEGGTDQGAELVIGSGRFIPGFEDQLVGVKAGEEKTITVTFPADYPAKNLAGKEATFDITVKDVAAPGAVEINDELASKLGIESADRLKEIVRGQIESQYGSLTRQKLKRQILDQLDEMYKFETPASLVDAEYNGIWSQVNNDLAQSGKTFEDEDTTEEKAREEYKTLAERRVRLGLVLSEIGEKAGVEVTEDEMQRAIYDQLRQYPGQEKQILEFFRSQPGAAASIRAPIFEEKVIDHLLTEIDVTDKKVTKEELLAEDEGEAKAETKKAAPKKKAAAKTEAAEAGEGEEAAAPKKKAAPKKKAADESAE.

In terms of domain architecture, PPIase FKBP-type spans 169 to 254 (GDRVAMDYVG…VKDVAAPGAV (86 aa)). Residues 441–495 (LAEDEGEAKAETKKAAPKKKAAAKTEAAEAGEGEEAAAPKKKAAPKKKAADESAE) form a disordered region.

The protein belongs to the FKBP-type PPIase family. Tig subfamily.

The protein resides in the cytoplasm. The catalysed reaction is [protein]-peptidylproline (omega=180) = [protein]-peptidylproline (omega=0). In terms of biological role, involved in protein export. Acts as a chaperone by maintaining the newly synthesized protein in an open conformation. Functions as a peptidyl-prolyl cis-trans isomerase. The protein is Trigger factor of Rhizobium etli (strain CIAT 652).